A 277-amino-acid polypeptide reads, in one-letter code: Putative phosphoenolpyruvate synthase regulatory protein (277 aa).

157-164 lines the ADP pocket; the sequence is GVSRSGKT.

The protein belongs to the pyruvate, phosphate/water dikinase regulatory protein family. PSRP subfamily.

It carries out the reaction [pyruvate, water dikinase] + ADP = [pyruvate, water dikinase]-phosphate + AMP + H(+). It catalyses the reaction [pyruvate, water dikinase]-phosphate + phosphate + H(+) = [pyruvate, water dikinase] + diphosphate. Functionally, bifunctional serine/threonine kinase and phosphorylase involved in the regulation of the phosphoenolpyruvate synthase (PEPS) by catalyzing its phosphorylation/dephosphorylation. This chain is Putative phosphoenolpyruvate synthase regulatory protein, found in Azoarcus sp. (strain BH72).